Here is a 474-residue protein sequence, read N- to C-terminus: Nuclear hormone receptor family member nhr-91 (474 aa).

The disordered stretch occupies residues 50-69 (SMTPSFSQTESPNSETDDST). Polar residues predominate over residues 51–69 (MTPSFSQTESPNSETDDST). The segment at residues 97–172 (SKLCSVCGDK…KGMLTEAVRE (76 aa)) is a DNA-binding region (nuclear receptor). 2 consecutive NR C4-type zinc fingers follow at residues 100–120 (CSVC…CEGC) and 136–155 (CSQD…CQSC). The 260-residue stretch at 215–474 (SGKKLIKELV…KNPRRLVFDE (260 aa)) folds into the NR LBD domain.

This sequence belongs to the nuclear hormone receptor family.

Its subcellular location is the nucleus. In terms of biological role, orphan nuclear receptor. The polypeptide is Nuclear hormone receptor family member nhr-91 (nhr-91) (Caenorhabditis elegans).